We begin with the raw amino-acid sequence, 256 residues long: Pimeloyl-[acyl-carrier protein] methyl ester esterase (256 aa).

Residues 15–242 (HLVLLHGWGL…AAHAPFISHP (228 aa)) enclose the AB hydrolase-1 domain. Substrate-binding positions include tryptophan 22, 82–83 (SL), and 143–147 (FLALQ). Serine 82 (nucleophile) is an active-site residue. Active-site residues include aspartate 207 and histidine 235. Histidine 235 serves as a coordination point for substrate.

The protein belongs to the AB hydrolase superfamily. Carboxylesterase BioH family. As to quaternary structure, monomer.

Its subcellular location is the cytoplasm. The catalysed reaction is 6-carboxyhexanoyl-[ACP] methyl ester + H2O = 6-carboxyhexanoyl-[ACP] + methanol + H(+). It functions in the pathway cofactor biosynthesis; biotin biosynthesis. In terms of biological role, the physiological role of BioH is to remove the methyl group introduced by BioC when the pimeloyl moiety is complete. It allows to synthesize pimeloyl-ACP via the fatty acid synthetic pathway through the hydrolysis of the ester bonds of pimeloyl-ACP esters. The polypeptide is Pimeloyl-[acyl-carrier protein] methyl ester esterase (Escherichia coli O157:H7).